A 671-amino-acid chain; its full sequence is Replication protein A 70 kDa DNA-binding subunit (671 aa).

Disordered regions lie at residues 143–166 (QVSQPKQMVTPPVSNINKPTPAVN) and 190–219 (MNKTAPVKQNNNNNNNNNGNNKNNSSLQIS). Over residues 199–213 (NNNNNNNNNGNNKNN) the composition is skewed to low complexity. The segment at residues 240–322 (QTIKVRITKK…NKGDHTVTVN (83 aa)) is a DNA-binding region (OB). The segment at 530–549 (CFSCKKKIARNNEVWTCINC) adopts a C4-type zinc-finger fold.

Belongs to the replication factor A protein 1 family. As to quaternary structure, component of the replication protein A complex (RPA), a heterotrimeric complex composed of RPA1, RPA2/TEB2 and RPA3/TEB3.

As part of the heterotrimeric replication protein A (RPA) complex, binds and stabilizes single-stranded DNA intermediates, that form during DNA replication or upon DNA stress. It prevents their reannealing and in parallel, recruits and activates different proteins and complexes involved in DNA metabolism. Thereby, it plays an essential role both in DNA replication and the cellular response to DNA damage. In the cellular response to DNA damage, the RPA complex controls DNA repair and DNA damage checkpoint activation. In Tetrahymena thermophila (strain SB210), this protein is Replication protein A 70 kDa DNA-binding subunit.